Here is a 957-residue protein sequence, read N- to C-terminus: Plasma membrane ATPase 1 (957 aa).

Topologically, residues 1–66 are cytoplasmic; that stretch reads MGEEKPEVLD…EKKDSKLLKF (66 aa). The chain crosses the membrane as a helical span at residues 67–86; sequence LGFMWNPLSWVMEAAAIMAI. Residues 87–98 lie on the Extracellular side of the membrane; it reads ALANGGGKPPDW. A helical membrane pass occupies residues 99-119; that stretch reads QDFVGIITLLIINSTISFIEE. Residues 120 to 248 lie on the Cytoplasmic side of the membrane; sequence NNAGNAAAAL…GHFQKVLTAI (129 aa). Residues 249–269 traverse the membrane as a helical segment; it reads GNFCICSIAVGMIIEIIVMYP. Over 270 to 279 the chain is Extracellular; that stretch reads IQHRAYRPGI. Residues 280–301 traverse the membrane as a helical segment; that stretch reads DNLLVLLIGGIPIAMPTVLSVT. At 302–648 the chain is on the cytoplasmic side; sequence MAIGSHRLAQ…TSRAIFQRMK (347 aa). Residue Asp-334 is the 4-aspartylphosphate intermediate of the active site. The Mg(2+) site is built by Asp-593 and Asp-597. Residues 649–670 form a helical membrane-spanning segment; sequence NYTIYAVSITIRIVLGFMLLAL. The Extracellular segment spans residues 671–675; it reads IWKFD. Residues 676–698 form a helical membrane-spanning segment; the sequence is FPPFMVLIIAILNDGTIMTISKD. Residues 699-714 lie on the Cytoplasmic side of the membrane; sequence RVKPSPLPDSWKLAEI. A helical membrane pass occupies residues 715–735; sequence FTTGIVLGGYLAMMTVIFFWA. The Extracellular portion of the chain corresponds to 736–760; the sequence is AYKTNFFPHVFGVSTLEKTATDDFR. Residues 761-781 form a helical membrane-spanning segment; it reads KLASAIYLQVSIISQALIFVT. Topologically, residues 782–793 are cytoplasmic; the sequence is RSRSWSFVERPG. The chain crosses the membrane as a helical span at residues 794-814; the sequence is FLLVIAFVIAQLVATLIAVYA. Residues 815-823 lie on the Extracellular side of the membrane; that stretch reads NWSFAAIEG. Residues 824–844 traverse the membrane as a helical segment; it reads IGWGWAGVIWIYNLVFYIPLD. The Cytoplasmic portion of the chain corresponds to 845–957; the sequence is IIKFFIRYAL…IETIQQAYTV (113 aa).

The protein belongs to the cation transport ATPase (P-type) (TC 3.A.3) family. Type IIIA subfamily. In terms of tissue distribution, expressed in roots, stems, leaves from both vegetative and flowering plants, and flowers at early and late stages of development with highest expression levels found in flowers and stem.

The protein resides in the cell membrane. The enzyme catalyses ATP + H2O + H(+)(in) = ADP + phosphate + 2 H(+)(out). In terms of biological role, the plasma membrane ATPase of plants and fungi is a hydrogen ion pump. The proton gradient it generates drives the active transport of nutrients by H(+)-symport. The resulting external acidification and/or internal alkinization may mediate growth responses. The protein is Plasma membrane ATPase 1 (PMA1) of Nicotiana plumbaginifolia (Leadwort-leaved tobacco).